A 404-amino-acid chain; its full sequence is Cysteine desulfurase IscS (404 aa).

Pyridoxal 5'-phosphate is bound by residues 75-76 (AT), Asn-155, Gln-183, and 203-205 (SAH). An N6-(pyridoxal phosphate)lysine modification is found at Lys-206. Position 243 (Thr-243) interacts with pyridoxal 5'-phosphate. Cys-328 acts as the Cysteine persulfide intermediate in catalysis. Residue Cys-328 coordinates [2Fe-2S] cluster.

It belongs to the class-V pyridoxal-phosphate-dependent aminotransferase family. NifS/IscS subfamily. Homodimer. Forms a heterotetramer with IscU, interacts with other sulfur acceptors. It depends on pyridoxal 5'-phosphate as a cofactor.

It is found in the cytoplasm. It catalyses the reaction (sulfur carrier)-H + L-cysteine = (sulfur carrier)-SH + L-alanine. Its pathway is cofactor biosynthesis; iron-sulfur cluster biosynthesis. In terms of biological role, master enzyme that delivers sulfur to a number of partners involved in Fe-S cluster assembly, tRNA modification or cofactor biosynthesis. Catalyzes the removal of elemental sulfur atoms from cysteine to produce alanine. Functions as a sulfur delivery protein for Fe-S cluster synthesis onto IscU, an Fe-S scaffold assembly protein, as well as other S acceptor proteins. This chain is Cysteine desulfurase IscS, found in Shewanella piezotolerans (strain WP3 / JCM 13877).